The chain runs to 315 residues: Prephenate dehydratase (315 aa).

Residues 7–190 (VVAYLGPAGT…ARTRFVAVQA (184 aa)) enclose the Prephenate dehydratase domain. The ACT domain maps to 204 to 283 (SVIFSLPNVP…LVFVGSWPSN (80 aa)).

It carries out the reaction prephenate + H(+) = 3-phenylpyruvate + CO2 + H2O. The protein operates within amino-acid biosynthesis; L-phenylalanine biosynthesis; phenylpyruvate from prephenate: step 1/1. The chain is Prephenate dehydratase (pheA) from Corynebacterium glutamicum (strain ATCC 13032 / DSM 20300 / JCM 1318 / BCRC 11384 / CCUG 27702 / LMG 3730 / NBRC 12168 / NCIMB 10025 / NRRL B-2784 / 534).